We begin with the raw amino-acid sequence, 861 residues long: DNA mismatch repair protein MutS (861 aa).

618–625 is a binding site for ATP; that stretch reads GPNMGGKS.

Belongs to the DNA mismatch repair MutS family.

Functionally, this protein is involved in the repair of mismatches in DNA. It is possible that it carries out the mismatch recognition step. This protein has a weak ATPase activity. The sequence is that of DNA mismatch repair protein MutS from Shewanella frigidimarina (strain NCIMB 400).